Here is a 501-residue protein sequence, read N- to C-terminus: Cytochrome P450 2J6 (501 aa).

Residue Cys-447 coordinates heme.

Belongs to the cytochrome P450 family. Requires heme as cofactor.

Its subcellular location is the endoplasmic reticulum membrane. It localises to the microsome membrane. It catalyses the reaction an organic molecule + reduced [NADPH--hemoprotein reductase] + O2 = an alcohol + oxidized [NADPH--hemoprotein reductase] + H2O + H(+). The polypeptide is Cytochrome P450 2J6 (Cyp2j6) (Mus musculus (Mouse)).